Here is a 143-residue protein sequence, read N- to C-terminus: Cytotoxic L-amino-acid oxidase (143 aa).

Belongs to the flavin monoamine oxidase family. It depends on FAD as a cofactor.

The enzyme catalyses an L-alpha-amino acid + O2 + H2O = a 2-oxocarboxylate + H2O2 + NH4(+). Its function is as follows. Cytotoxic L-amino acid oxidase with high oxidase activity towards DL-methionine and L-methionine, L-phenylalanine, DL-norleucine, L-isoleucine, L-arginine, L-tyrosine, and DL-leucine. Shows relatively low activity towards DL-lysine and L-lysine, DL-asparagine, DL-valine, L-histidine, DL-threonine, DL-tryptophan, and L-glutamic acid; and no activity towards L-cysteine, L-glycine, L-proline, L-oxyproline, DL-serine, and DL-aspartic acid. Does not use benzylamine, ethanolamine, diethylamine, meta- and para-phenylendiamine, ortho-, meta- and para-aminophenols, or putrescin as a substrate. Acts as a toxin by inducing chromatin condensation, as well as DNA and nucleus fragmentation, which are typical for apoptosis. Probably induces cell damage indirectly via the generation of free radicals and oxidant agents that can trigger cell impairment and apoptosis by a caspase-independent pathway. This chain is Cytotoxic L-amino-acid oxidase, found in Amanita phalloides (Death cap).